Here is a 146-residue protein sequence, read N- to C-terminus: Ankyrin repeat-containing protein P16F5.05c (146 aa).

ANK repeat units lie at residues 1–31, 35–64, 70–99, and 103–132; these read MDVD…ELSR, NGNS…KEVI, SGNT…DPHI, and YEKS…AKGS.

The protein localises to the cytoplasm. It localises to the nucleus. The sequence is that of Ankyrin repeat-containing protein P16F5.05c from Schizosaccharomyces pombe (strain 972 / ATCC 24843) (Fission yeast).